Reading from the N-terminus, the 172-residue chain is Carotene biosynthesis-related protein CBR, chloroplastic (172 aa).

Residues 41–66 (AENNPSTPPPSSPSPPPPPPTPAAPT) are disordered. Pro residues predominate over residues 46-63 (STPPPSSPSPPPPPPTPA). 2 consecutive transmembrane segments (helical) span residues 111–131 (PTLIALTFVLFSAASLIPAFA) and 152–172 (FAMIGFAAMLVYEGIQGIALF).

It belongs to the ELIP/psbS family.

The protein resides in the plastid. It localises to the chloroplast membrane. In terms of biological role, putative zeaxanthin binding protein. That forms photoprotective complexes within the light-harvesting antennae. The protein is Carotene biosynthesis-related protein CBR, chloroplastic (CBR) of Dunaliella salina (Green alga).